A 370-amino-acid polypeptide reads, in one-letter code: NSFL1 cofactor p47 (370 aa).

Positions 54–73 (SQATPSSVSRGTAPSDNRVT) are enriched in polar residues. The segment at 54-116 (SQATPSSVSR…VGPPRKKSPN (63 aa)) is disordered. Phosphoserine is present on residues Ser-74, Ser-102, Ser-114, and Ser-140. The Nuclear localization signal motif lies at 109-115 (PPRKKSP). Position 167 is a phosphotyrosine (Tyr-167). Positions 172–175 (KRQH) match the Nuclear localization signal motif. Residues Ser-176, Ser-192, and Ser-272 each carry the phosphoserine modification. Positions 179–244 (DVHVVLKLWK…MEDHRDEDFV (66 aa)) constitute an SEP domain. Residues 261 to 287 (GSTAPQVLSTSSPAQQAENEAKASSSI) show a composition bias toward polar residues. A disordered region spans residues 261-289 (GSTAPQVLSTSSPAQQAENEAKASSSILI). Residues 291 to 368 (ESEPTTNIQI…NLLNAVIVQR (78 aa)) form the UBX domain.

This sequence belongs to the NSFL1C family. In terms of assembly, part of a ternary complex containing STX5A, NSFL1C and VCP. NSFL1C forms a homotrimer that binds to one end of a VCP homohexamer. The complex binds to membranes enriched in phosphatidylethanolamine-containing lipids and promotes Golgi membrane fusion. Interaction with VCIP135 leads to dissociation of the complex via ATP hydrolysis by VCP. Binds ubiquitin and mono-ubiquitinated proteins via its N-terminal UBA-like domain when bound to VCP. In terms of processing, phosphorylated during mitosis. Phosphorylation inhibits interaction with Golgi membranes and is required for the fragmentation of the Golgi stacks during mitosis.

The protein resides in the nucleus. The protein localises to the golgi apparatus. It is found in the golgi stack. Its subcellular location is the chromosome. It localises to the cytoplasm. The protein resides in the cytoskeleton. The protein localises to the microtubule organizing center. It is found in the centrosome. Its function is as follows. Reduces the ATPase activity of VCP. Necessary for the fragmentation of Golgi stacks during mitosis and for VCP-mediated reassembly of Golgi stacks after mitosis. May play a role in VCP-mediated formation of transitional endoplasmic reticulum (tER). Inhibits the activity of CTSL (in vitro). Together with UBXN2B/p37, regulates the centrosomal levels of kinase AURKA/Aurora A during mitotic progression by promoting AURKA removal from centrosomes in prophase. Also, regulates spindle orientation during mitosis. In Homo sapiens (Human), this protein is NSFL1 cofactor p47 (NSFL1C).